A 520-amino-acid polypeptide reads, in one-letter code: Apolipoprotein N-acyltransferase (520 aa).

The next 7 membrane-spanning stretches (helical) occupy residues 12-32 (IFTY…FSPF), 33-53 (DYWG…KTAE), 58-78 (LWSA…WVHV), 93-113 (VLVL…AYLI), 122-142 (AMFP…FTGF), 168-188 (VTFF…VLLI), and 193-213 (WNVV…SAYS). The region spanning 232–479 (AQGNIEQNLK…ETTLTHKVAA (248 aa)) is the CN hydrolase domain. The active-site Proton acceptor is glutamate 272. Lysine 338 is a catalytic residue. The Nucleophile role is filled by cysteine 390. The chain crosses the membrane as a helical span at residues 484 to 504 (TPYAVFGNTAIYGLSLLLLLM).

It belongs to the CN hydrolase family. Apolipoprotein N-acyltransferase subfamily.

Its subcellular location is the cell inner membrane. It catalyses the reaction N-terminal S-1,2-diacyl-sn-glyceryl-L-cysteinyl-[lipoprotein] + a glycerophospholipid = N-acyl-S-1,2-diacyl-sn-glyceryl-L-cysteinyl-[lipoprotein] + a 2-acyl-sn-glycero-3-phospholipid + H(+). It functions in the pathway protein modification; lipoprotein biosynthesis (N-acyl transfer). In terms of biological role, catalyzes the phospholipid dependent N-acylation of the N-terminal cysteine of apolipoprotein, the last step in lipoprotein maturation. This chain is Apolipoprotein N-acyltransferase, found in Pasteurella multocida (strain Pm70).